The primary structure comprises 670 residues: Methionine--tRNA ligase (670 aa).

The short motif at 14–24 (PYANGHLHLGH) is the 'HIGH' region element. Cysteine 145, cysteine 148, cysteine 158, and cysteine 161 together coordinate Zn(2+). The short motif at 330 to 334 (KMSKS) is the 'KMSKS' region element. Lysine 333 lines the ATP pocket. Residues 570–670 (DFAKVDLRIA…AGALPGMKVK (101 aa)) form the tRNA-binding domain.

This sequence belongs to the class-I aminoacyl-tRNA synthetase family. MetG type 1 subfamily. Homodimer. The cofactor is Zn(2+).

The protein localises to the cytoplasm. The enzyme catalyses tRNA(Met) + L-methionine + ATP = L-methionyl-tRNA(Met) + AMP + diphosphate. Is required not only for elongation of protein synthesis but also for the initiation of all mRNA translation through initiator tRNA(fMet) aminoacylation. This Legionella pneumophila (strain Paris) protein is Methionine--tRNA ligase.